Here is a 435-residue protein sequence, read N- to C-terminus: D-amino acid dehydrogenase (435 aa).

3 to 17 (VLILGSGVIGTTSAW) contacts FAD.

Belongs to the DadA oxidoreductase family. It depends on FAD as a cofactor.

It carries out the reaction a D-alpha-amino acid + A + H2O = a 2-oxocarboxylate + AH2 + NH4(+). It functions in the pathway amino-acid degradation; D-alanine degradation; NH(3) and pyruvate from D-alanine: step 1/1. Functionally, oxidative deamination of D-amino acids. This is D-amino acid dehydrogenase from Xylella fastidiosa (strain 9a5c).